A 279-amino-acid chain; its full sequence is Putative hydroxypyruvate isomerase (279 aa).

Active-site proton donor/acceptor residues include glutamate 155 and glutamate 256. The tract at residues 260 to 279 is disordered; the sequence is GDDPSAQSFSWLPAGARAAR.

It belongs to the hyi family.

The catalysed reaction is 3-hydroxypyruvate = 2-hydroxy-3-oxopropanoate. Its function is as follows. Catalyzes the reversible isomerization between hydroxypyruvate and 2-hydroxy-3-oxopropanoate (also termed tartronate semialdehyde). This Streptomyces coelicolor (strain ATCC BAA-471 / A3(2) / M145) protein is Putative hydroxypyruvate isomerase.